We begin with the raw amino-acid sequence, 225 residues long: Cytochrome b6-f complex iron-sulfur subunit, chloroplastic (225 aa).

The transit peptide at 1 to 46 (MASTALSTASNPTQLCRSRASLGKPVKGLGFGRERVPRTATTITCQ) directs the protein to the chloroplast. The chain crosses the membrane as a helical span at residues 69–89 (LLGAISLPTVGMLVPYGAFFI). One can recognise a Rieske domain in the interval 112 to 208 (AEEWLKTHGP…ADVDDGKVLF (97 aa)). Residues Cys154, His156, Cys172, and His175 each contribute to the [2Fe-2S] cluster site. An intrachain disulfide couples Cys159 to Cys174.

This sequence belongs to the Rieske iron-sulfur protein family. As to quaternary structure, the 4 large subunits of the cytochrome b6-f complex are cytochrome b6, subunit IV (17 kDa polypeptide, petD), cytochrome f and the Rieske protein, while the 4 small subunits are petG, petL, petM and petN. The complex functions as a dimer. [2Fe-2S] cluster is required as a cofactor.

The protein resides in the plastid. Its subcellular location is the chloroplast thylakoid membrane. It catalyses the reaction 2 oxidized [plastocyanin] + a plastoquinol + 2 H(+)(in) = 2 reduced [plastocyanin] + a plastoquinone + 4 H(+)(out). Its function is as follows. Component of the cytochrome b6-f complex, which mediates electron transfer between photosystem II (PSII) and photosystem I (PSI), cyclic electron flow around PSI, and state transitions. The protein is Cytochrome b6-f complex iron-sulfur subunit, chloroplastic (petC) of Oryza sativa subsp. japonica (Rice).